Here is a 232-residue protein sequence, read N- to C-terminus: Large ribosomal subunit protein uL1 (232 aa).

Belongs to the universal ribosomal protein uL1 family. In terms of assembly, part of the 50S ribosomal subunit.

Its function is as follows. Binds directly to 23S rRNA. The L1 stalk is quite mobile in the ribosome, and is involved in E site tRNA release. Functionally, protein L1 is also a translational repressor protein, it controls the translation of the L11 operon by binding to its mRNA. The sequence is that of Large ribosomal subunit protein uL1 from Bacteroides thetaiotaomicron (strain ATCC 29148 / DSM 2079 / JCM 5827 / CCUG 10774 / NCTC 10582 / VPI-5482 / E50).